A 297-amino-acid polypeptide reads, in one-letter code: ATP synthase gamma chain (297 aa).

The protein belongs to the ATPase gamma chain family. In terms of assembly, F-type ATPases have 2 components, CF(1) - the catalytic core - and CF(0) - the membrane proton channel. CF(1) has five subunits: alpha(3), beta(3), gamma(1), delta(1), epsilon(1). CF(0) has three main subunits: a, b and c.

The protein localises to the cell membrane. Functionally, produces ATP from ADP in the presence of a proton gradient across the membrane. The gamma chain is believed to be important in regulating ATPase activity and the flow of protons through the CF(0) complex. The protein is ATP synthase gamma chain of Arthrobacter sp. (strain FB24).